The chain runs to 196 residues: Putative NADH dehydrogenase/NAD(P)H nitroreductase Pnuc_0932 (196 aa).

The protein belongs to the nitroreductase family. HadB/RutE subfamily. Requires FMN as cofactor.

This Polynucleobacter asymbioticus (strain DSM 18221 / CIP 109841 / QLW-P1DMWA-1) (Polynucleobacter necessarius subsp. asymbioticus) protein is Putative NADH dehydrogenase/NAD(P)H nitroreductase Pnuc_0932.